The chain runs to 511 residues: Inositol-3-phosphate synthase (511 aa).

The NAD(+) site is built by Gly-70, Asn-71, Asn-72, Asp-143, Ser-179, Ile-180, Gln-190, Arg-193, Ser-230, Ala-231, Asn-232, Thr-233, Gly-281, Ser-282, Asp-306, Thr-309, Asn-340, Asn-341, Asp-342, Lys-355, Gly-393, Asp-394, Asp-422, and Ser-423.

It belongs to the myo-inositol 1-phosphate synthase family. The cofactor is NAD(+).

The protein localises to the cytoplasm. It carries out the reaction D-glucose 6-phosphate = 1D-myo-inositol 3-phosphate. Its pathway is polyol metabolism; myo-inositol biosynthesis; myo-inositol from D-glucose 6-phosphate: step 1/2. Its function is as follows. Key enzyme in myo-inositol biosynthesis pathway that catalyzes the conversion of glucose 6-phosphate to 1-myo-inositol 1-phosphate in a NAD-dependent manner. Rate-limiting enzyme in the synthesis of all inositol-containing compounds. This chain is Inositol-3-phosphate synthase (ino1), found in Dictyostelium discoideum (Social amoeba).